We begin with the raw amino-acid sequence, 98 residues long: N(2)-fixation sustaining protein CowN (98 aa).

Belongs to the CowN family.

Is required to sustain N(2)-dependent growth in the presence of low levels of carbon monoxide (CO). Probably acts by protecting the N(2) fixation ability of the nitrogenase complex, which is inactivated in the presence of CO. The protein is N(2)-fixation sustaining protein CowN of Dechloromonas aromatica (strain RCB).